Reading from the N-terminus, the 207-residue chain is Reticulon-1-A (207 aa).

The Reticulon domain maps to 21–207; that stretch reads AIDLLYWRDI…AKIPGTKQKE (187 aa). 2 helical membrane-spanning segments follow: residues 35–55 and 139–159; these read IVFGSVLLMLFSLIQFSVVSV and VLMWLLTYVGALFNGLTLLIM.

In terms of tissue distribution, expressed in the animal hemisphere (presumptive neural ectoderm) of blastula and gastrula stage embryos, and along the anterior neural border, in the panplacodal primordium, and in the dorsolateral side of archenteron roof of late neurula embryos. At the tailbud stage, expression localizes to the central nervous system, including the spinal cord, prosencephalon, mesencephalon and rhombencephalon, as well as the lateral line placode, otic vesicle and pronephros.

The protein localises to the endoplasmic reticulum membrane. It localises to the nucleus. In terms of biological role, inhibits amyloid precursor protein processing, probably by blocking BACE1 activity. The chain is Reticulon-1-A (rtn1-a) from Xenopus laevis (African clawed frog).